A 149-amino-acid chain; its full sequence is Arginine repressor (149 aa).

This sequence belongs to the ArgR family.

The protein resides in the cytoplasm. The protein operates within amino-acid biosynthesis; L-arginine biosynthesis [regulation]. In terms of biological role, regulates arginine biosynthesis genes. In Geobacillus sp. (strain WCH70), this protein is Arginine repressor.